Reading from the N-terminus, the 479-residue chain is Serine palmitoyltransferase 1 (479 aa).

Residues 1 to 16 (MFLFDIYNNILYYTKE) are Lumenal-facing. A helical transmembrane segment spans residues 17-37 (FIVTSTSPNLFIHGLMAVFII). Topologically, residues 38–479 (YLLTKRPFKP…KCTSFVLESN (442 aa)) are cytoplasmic.

The protein belongs to the class-II pyridoxal-phosphate-dependent aminotransferase family. Forms a heterodimer with sptB. Pyridoxal 5'-phosphate is required as a cofactor.

It localises to the endoplasmic reticulum membrane. It catalyses the reaction L-serine + hexadecanoyl-CoA + H(+) = 3-oxosphinganine + CO2 + CoA. It functions in the pathway lipid metabolism; sphingolipid metabolism. Its function is as follows. Component of serine palmitoyltransferase (SPT), which catalyzes the committed step in the synthesis of sphingolipids, the condensation of serine with palmitoyl CoA to form the long chain base 3-ketosphinganine. The protein is Serine palmitoyltransferase 1 (sptA) of Dictyostelium discoideum (Social amoeba).